Here is a 549-residue protein sequence, read N- to C-terminus: MLNQKIQNPNPDELMIEVDLCYELDPYELKLDEMIEAEPEPEMIEGLPASDALTPADRYLELFEHVQSAKIFPDSKTFPDCAPKMDPLDILIRYRKVRRHRDFDLRKFVENHFWLPEVYSSEYVSDPQNSLKEHIDQLWPVLTREPQDHIPWSSLLALPQSYIVPGGRFSETYYWDSYFTMLGLAESGREDLLKCMADNFAWMIENYGHIPNGNRTYYLSRSQPPVFALMVELFEEDGVRGARRYLDHLKMEYAFWMDGAESLIPNQAYRHVVRMPDGSLLNRYWDDRDTPRDESWLEDVETAKHSGRPPNEVYRDLRAGAASGWDYSSRWLRDTGRLASIRTTQFIPIDLNAFLFKLESAIANISALKGEKETEALFRQKASARRDAVNRYLWDDENGIYRDYDWRREQLALFSAAAIVPLYVGMANHEQADRLANAVRSRLLTPGGILASEYETGEQWDKPNGWAPLQWMAIQGFKMYGDDLLGDEIARNWLKTVNQFYLEQHKLIEKYHIADGVPREGGGGEYPLQDGFGWTNGVVRRLIGLYGEP.

Residues arginine 168, 175 to 176 (WD), asparagine 212, 221 to 223 (RSQ), 292 to 294 (RDE), and glycine 324 contribute to the substrate site. Active-site proton donor/acceptor residues include aspartate 326 and glutamate 509. Glutamate 525 lines the substrate pocket.

It belongs to the glycosyl hydrolase 37 family. Monomer.

It is found in the cytoplasm. The catalysed reaction is alpha,alpha-trehalose + H2O = alpha-D-glucose + beta-D-glucose. It functions in the pathway glycan degradation; trehalose degradation; D-glucose from alpha,alpha-trehalose: step 1/1. Hydrolyzes trehalose to glucose. Could be involved, in cells returning to low osmolarity conditions, in the utilization of the accumulated cytoplasmic trehalose, which was synthesized in response to high osmolarity. The protein is Cytoplasmic trehalase of Escherichia coli O127:H6 (strain E2348/69 / EPEC).